We begin with the raw amino-acid sequence, 113 residues long: MLSPLSPRIIAAFTTAVGAAAIGLAVATAGTAGANTKDEAFIAQMESIGVTFSSPQVATQQAQLVCKKLASGETGTEIAEEVLSQTNLTTKQAAYFVVDATKAYCPQYASQLT.

An N-terminal signal peptide occupies residues 1 to 19; the sequence is MLSPLSPRIIAAFTTAVGA.

It to M.tuberculosis Rv1291c.

This is an uncharacterized protein from Mycobacterium tuberculosis (strain CDC 1551 / Oshkosh).